The primary structure comprises 384 residues: Dual specificity protein phosphatase 9 (384 aa).

At serine 16 the chain carries Phosphoserine. Positions 18-139 constitute a Rhodanese domain; it reads PRPRLLLLDC…FQAECPHLCE (122 aa). The region spanning 203-346 is the Tyrosine-protein phosphatase domain; the sequence is FPVQILPNLY…LLDFERSLRL (144 aa). Serine 262 is subject to Phosphoserine. Residue cysteine 290 is the Phosphocysteine intermediate of the active site. Positions 348–384 are disordered; sequence ERHSQEQGSGGQASAASNPPSFFTTPTSDGAFELAPT. A Phosphoserine modification is found at serine 351. The span at 359–375 shows a compositional bias: polar residues; it reads QASAASNPPSFFTTPTS.

Belongs to the protein-tyrosine phosphatase family. Non-receptor class dual specificity subfamily.

It localises to the cytoplasm. The catalysed reaction is O-phospho-L-tyrosyl-[protein] + H2O = L-tyrosyl-[protein] + phosphate. It carries out the reaction O-phospho-L-seryl-[protein] + H2O = L-seryl-[protein] + phosphate. It catalyses the reaction O-phospho-L-threonyl-[protein] + H2O = L-threonyl-[protein] + phosphate. Functionally, inactivates MAP kinases. Has a specificity for the ERK family. The protein is Dual specificity protein phosphatase 9 (DUSP9) of Homo sapiens (Human).